The primary structure comprises 185 residues: Ribosome-recycling factor (185 aa).

The protein belongs to the RRF family.

The protein resides in the cytoplasm. Responsible for the release of ribosomes from messenger RNA at the termination of protein biosynthesis. May increase the efficiency of translation by recycling ribosomes from one round of translation to another. In Helicobacter hepaticus (strain ATCC 51449 / 3B1), this protein is Ribosome-recycling factor.